The sequence spans 290 residues: Acetyl-coenzyme A carboxylase carboxyl transferase subunit beta (290 aa).

The CoA carboxyltransferase N-terminal domain maps to 28–290; sequence VMTKCPQCKK…GGGESGWWRN (263 aa). Residues C32, C35, C51, and C54 each contribute to the Zn(2+) site. The C4-type zinc-finger motif lies at 32–54; the sequence is CPQCKKIMYTKELVKNLRVCLSC.

It belongs to the AccD/PCCB family. Acetyl-CoA carboxylase is a heterohexamer composed of biotin carboxyl carrier protein (AccB), biotin carboxylase (AccC) and two subunits each of ACCase subunit alpha (AccA) and ACCase subunit beta (AccD). Zn(2+) is required as a cofactor.

It is found in the cytoplasm. It catalyses the reaction N(6)-carboxybiotinyl-L-lysyl-[protein] + acetyl-CoA = N(6)-biotinyl-L-lysyl-[protein] + malonyl-CoA. It participates in lipid metabolism; malonyl-CoA biosynthesis; malonyl-CoA from acetyl-CoA: step 1/1. In terms of biological role, component of the acetyl coenzyme A carboxylase (ACC) complex. Biotin carboxylase (BC) catalyzes the carboxylation of biotin on its carrier protein (BCCP) and then the CO(2) group is transferred by the transcarboxylase to acetyl-CoA to form malonyl-CoA. In Geobacillus thermodenitrificans (strain NG80-2), this protein is Acetyl-coenzyme A carboxylase carboxyl transferase subunit beta.